Here is a 325-residue protein sequence, read N- to C-terminus: Putative gluconeogenesis factor (325 aa).

Belongs to the gluconeogenesis factor family.

It is found in the cytoplasm. Functionally, required for morphogenesis under gluconeogenic growth conditions. In Streptococcus pyogenes serotype M3 (strain ATCC BAA-595 / MGAS315), this protein is Putative gluconeogenesis factor.